The sequence spans 469 residues: 3-isopropylmalate dehydratase large subunit (469 aa).

Cys347, Cys407, and Cys410 together coordinate [4Fe-4S] cluster.

It belongs to the aconitase/IPM isomerase family. LeuC type 1 subfamily. Heterodimer of LeuC and LeuD. The cofactor is [4Fe-4S] cluster.

It catalyses the reaction (2R,3S)-3-isopropylmalate = (2S)-2-isopropylmalate. The protein operates within amino-acid biosynthesis; L-leucine biosynthesis; L-leucine from 3-methyl-2-oxobutanoate: step 2/4. In terms of biological role, catalyzes the isomerization between 2-isopropylmalate and 3-isopropylmalate, via the formation of 2-isopropylmaleate. The chain is 3-isopropylmalate dehydratase large subunit from Photorhabdus laumondii subsp. laumondii (strain DSM 15139 / CIP 105565 / TT01) (Photorhabdus luminescens subsp. laumondii).